The following is a 445-amino-acid chain: POU domain, class 3, transcription factor 2 (445 aa).

Disordered regions lie at residues 64–173 (ALSH…WRSA) and 203–269 (LGAG…TPTS). The span at 67 to 90 (HGGGGGGGGGGGGGGGGGGGGGDG) shows a compositional bias: gly residues. Composition is skewed to low complexity over residues 125 to 151 (QQQH…QQQQ) and 163 to 173 (HHPGPGAWRSA). Residues 217–226 (LRDAHDEPHH) are compositionally biased toward basic and acidic residues. Residues 227–237 (ADHHPHPHSHP) show a composition bias toward basic residues. Residues 239-253 (QQPPPPPPPQGPPGH) show a composition bias toward pro residues. A POU-specific domain is found at 264-338 (EDTPTSDDLE…LLNKWLEEAD (75 aa)). S343 carries the phosphoserine modification. The segment at residues 356–415 (KRKKRTSIEVSVKGALESHFLKCPKPSAQEITSLADSLQLEKEVVRVWFCNRRQKEKRMT) is a DNA-binding region (homeobox). Residues 411–445 (EKRMTPPGGTLPGAEDVYGGSRDTPPHHGVQTPVQ) form a disordered region.

Belongs to the POU transcription factor family. Class-3 subfamily. As to quaternary structure, interacts with PQBP1. Interaction with ISL1. Expressed specifically in the neuroectodermal cell lineage.

Its subcellular location is the nucleus. Transcription factor that plays a key role in neuronal differentiation. Binds preferentially to the recognition sequence which consists of two distinct half-sites, ('GCAT') and ('TAAT'), separated by a non-conserved spacer region of 0, 2, or 3 nucleotides. Acts as a transcriptional activator when binding cooperatively with SOX4, SOX11, or SOX12 to gene promoters. The combination of three transcription factors, ASCL1, POU3F2/BRN2 and MYT1L, is sufficient to reprogram fibroblasts and other somatic cells into induced neuronal (iN) cells in vitro. Acts downstream of ASCL1, accessing chromatin that has been opened by ASCL1, and promotes transcription of neuronal genes. This is POU domain, class 3, transcription factor 2 (Pou3f2) from Mus musculus (Mouse).